Reading from the N-terminus, the 133-residue chain is ATP synthase epsilon chain (133 aa).

The protein belongs to the ATPase epsilon chain family. F-type ATPases have 2 components, CF(1) - the catalytic core - and CF(0) - the membrane proton channel. CF(1) has five subunits: alpha(3), beta(3), gamma(1), delta(1), epsilon(1). CF(0) has three main subunits: a, b and c.

The protein resides in the cell membrane. Its function is as follows. Produces ATP from ADP in the presence of a proton gradient across the membrane. The sequence is that of ATP synthase epsilon chain (atpC) from Mycoplasma genitalium (strain ATCC 33530 / DSM 19775 / NCTC 10195 / G37) (Mycoplasmoides genitalium).